The following is a 176-amino-acid chain: MKFLFDLFPIILFFAAFKLWGIFTATAVAIAATLAQVAWVAFRHRKVDTMLWVSLGVIVVFGGATLVLHDEKFIQWKPTVLYWLFAVGLVAARYAFGKNLIEKMMGKQLTLPEPVWDKLNLAWAAFFAALGVTNLYVVRNFTESQWVNFKLFGTTGAIVVFVILQSLWLAKYLKEE.

5 helical membrane-spanning segments follow: residues Phe-3 to Phe-23, Thr-49 to His-69, Lys-72 to Ala-92, Lys-118 to Val-138, and Phe-149 to Leu-169.

It belongs to the YciB family.

It localises to the cell inner membrane. In terms of biological role, plays a role in cell envelope biogenesis, maintenance of cell envelope integrity and membrane homeostasis. This Burkholderia mallei (strain NCTC 10247) protein is Inner membrane-spanning protein YciB.